Reading from the N-terminus, the 574-residue chain is DNA polymerase alpha subunit B (574 aa).

It belongs to the DNA polymerase alpha subunit B family. Component of the alpha DNA polymerase complex (also known as the alpha DNA polymerase-primase complex) consisting of four subunits: the catalytic subunit pol1, the accessory subunit spb70/pol12, and the primase complex subunits spp1/pri1 and spp2/pri2 respectively. Interacts with orc1. Interacts with orc2; the interaction occurs on the chromatin, is stable thoughout the cell cycle and is independent from spb70 role in the alpha DNA polymerase complex. Phosphorylated in a cell cycle-dependent manner.

It is found in the nucleus. The protein resides in the chromosome. In terms of biological role, accessory subunit of the DNA polymerase alpha complex (also known as the alpha DNA polymerase-primase complex) which plays an essential role in the initiation of DNA synthesis. During the S phase of the cell cycle, the DNA polymerase alpha complex (composed of a catalytic subunit pol1, an accessory subunit spb70/pol12 and two primase subunits, the catalytic subunit spp1/pri1 and the regulatory subunit spp2/pri2) is recruited to DNA at the replicative forks. The primase subunit of the polymerase alpha complex initiates DNA synthesis by oligomerising short RNA primers on both leading and lagging strands. The sequence is that of DNA polymerase alpha subunit B from Schizosaccharomyces pombe (strain 972 / ATCC 24843) (Fission yeast).